Consider the following 117-residue polypeptide: Small ribosomal subunit protein bS6 (117 aa).

The segment at 96–117 is disordered; sequence KEAAAPAPKAAPVESAPAVEAE. Residues 99–117 show a composition bias toward low complexity; it reads AAPAPKAAPVESAPAVEAE.

Belongs to the bacterial ribosomal protein bS6 family.

In terms of biological role, binds together with bS18 to 16S ribosomal RNA. This chain is Small ribosomal subunit protein bS6, found in Geobacter sulfurreducens (strain ATCC 51573 / DSM 12127 / PCA).